We begin with the raw amino-acid sequence, 244 residues long: Haloacid dehalogenase-like hydrolase domain-containing protein Sgpp (244 aa).

The Nucleophile role is filled by Asp28. Residues Asp28, Asp30, and Asp189 each contribute to the Mg(2+) site. Asp30 acts as the Proton donor in catalysis.

Belongs to the HAD-like hydrolase superfamily. DOG/GPP family. Requires Mg(2+) as cofactor. As to expression, ubiquitous with highest expression in flowers.

In terms of biological role, acts as a phosphosugar phosphatase on a broad range of sugar phosphate substrates with preferential activity on D-ribose-5-phosphate, 2-deoxy-D-ribose-5-phosphate, 2-deoxy-D-glucose-6-phosphate, and D-mannose-6-phosphate and with a lower activity on D-fructose-1-phosphate, D-glucose-6-phosphate, DL-glycerol-3-phosphate, and D-fructose-6-phosphate. The polypeptide is Haloacid dehalogenase-like hydrolase domain-containing protein Sgpp (SGPP) (Arabidopsis thaliana (Mouse-ear cress)).